The following is a 120-amino-acid chain: 2-amino-4-hydroxy-6-hydroxymethyldihydropteridine pyrophosphokinase (120 aa).

The protein belongs to the HPPK family.

The enzyme catalyses 6-hydroxymethyl-7,8-dihydropterin + ATP = (7,8-dihydropterin-6-yl)methyl diphosphate + AMP + H(+). It functions in the pathway cofactor biosynthesis; tetrahydrofolate biosynthesis; 2-amino-4-hydroxy-6-hydroxymethyl-7,8-dihydropteridine diphosphate from 7,8-dihydroneopterin triphosphate: step 4/4. Functionally, catalyzes the transfer of pyrophosphate from adenosine triphosphate (ATP) to 6-hydroxymethyl-7,8-dihydropterin, an enzymatic step in folate biosynthesis pathway. This chain is 2-amino-4-hydroxy-6-hydroxymethyldihydropteridine pyrophosphokinase (folK), found in Pseudomonas putida (Arthrobacter siderocapsulatus).